A 597-amino-acid polypeptide reads, in one-letter code: Tubulin polyglutamylase ttll-4 (597 aa).

Positions Met1 to Ala18 are enriched in polar residues. Disordered stretches follow at residues Met1–Arg39 and Ser80–Ser107. A compositionally biased stretch (acidic residues) spans Tyr26–Ser35. The TTL domain maps to Gln134–His472. ATP contacts are provided by residues Lys250, Arg256–Gly257, Gln278–Ile281, and Lys291–Asp293. Arg256 contacts a protein. Arg317 is an L-glutamate binding site. Thr338–Asn339 is an ATP binding site. L-glutamate contacts are provided by Tyr340, Ser341, and Lys358. 3 residues coordinate Mg(2+): Asp418, Glu431, and Asn433. Lys449 lines the L-glutamate pocket.

The protein belongs to the tubulin--tyrosine ligase family. Requires Mg(2+) as cofactor.

It catalyses the reaction L-glutamyl-[protein] + L-glutamate + ATP = gamma-L-glutamyl-L-glutamyl-[protein] + ADP + phosphate + H(+). Functionally, monoglutamylase which modifies tubulin, adding a single glutamate on the gamma-carboxyl group of specific glutamate residues of target proteins. Involved in the side-chain initiation step of the polyglutamylation reaction but not in the elongation step. Preferentially modifies beta-tail tubulin over the alpha-tubulin. Involved in side-chain glutamylation of tubulin in sensory cilia. Together with ttll-5 and ttll-11, required for male mating. The chain is Tubulin polyglutamylase ttll-4 (ttll-4) from Caenorhabditis briggsae.